The sequence spans 140 residues: Ribosome maturation factor RimP (140 aa).

Belongs to the RimP family.

It localises to the cytoplasm. Functionally, required for maturation of 30S ribosomal subunits. This chain is Ribosome maturation factor RimP, found in Campylobacter jejuni subsp. jejuni serotype O:23/36 (strain 81-176).